Reading from the N-terminus, the 990-residue chain is Pro-apoptotic serine protease NMA111 (990 aa).

A disordered region spans residues 1-32 (MSVTNSNRKRSLSEVSEGSDPEAPAKTRNSYT). A serine protease region spans residues 73-263 (VVSIHFSQVA…LPLDRILRAL (191 aa)). Residues His111, Asp142, and Ser225 each act as charge relay system in the active site. PDZ domains follow at residues 290-368 (RRLG…QRGG) and 758-843 (SILT…VREG).

Belongs to the peptidase S1C family.

The protein resides in the nucleus. Its function is as follows. Nuclear serine protease which mediates apoptosis. This chain is Pro-apoptotic serine protease NMA111 (NMA111), found in Vanderwaltozyma polyspora (strain ATCC 22028 / DSM 70294 / BCRC 21397 / CBS 2163 / NBRC 10782 / NRRL Y-8283 / UCD 57-17) (Kluyveromyces polysporus).